Here is a 173-residue protein sequence, read N- to C-terminus: Photosystem I assembly protein Ycf3 (173 aa).

3 TPR repeats span residues 35–68 (AYIY…EENK), 72–105 (GETL…NPKQ), and 120–153 (GRNA…YPGG).

Belongs to the Ycf3 family.

It localises to the cellular thylakoid membrane. In terms of biological role, essential for the assembly of the photosystem I (PSI) complex. May act as a chaperone-like factor to guide the assembly of the PSI subunits. The sequence is that of Photosystem I assembly protein Ycf3 from Prochlorococcus marinus (strain MIT 9312).